The following is a 143-amino-acid chain: Histone H2B (143 aa).

The segment at 1 to 52 is disordered; sequence MAPKPASTAGKAPASTASKAPVKSDAAKTASKSKVSSGADGEKKKRKKTRKE. Lys-11 is subject to N6-acetyllysine; alternate. Lys-11 participates in a covalent cross-link: Glycyl lysine isopeptide (Lys-Gly) (interchain with G-Cter in SUMO); alternate. Ser-15 is subject to Phosphoserine. Residue Lys-19 is modified to N6-acetyllysine. A compositionally biased stretch (low complexity) spans 23 to 39; sequence KSDAAKTASKSKVSSGA. Lys-137 is covalently cross-linked (Glycyl lysine isopeptide (Lys-Gly) (interchain with G-Cter in ubiquitin)).

The protein belongs to the histone H2B family. As to quaternary structure, the nucleosome is a histone octamer containing two molecules each of H2A, H2B, H3 and H4 assembled in one H3-H4 heterotetramer and two H2A-H2B heterodimers. The octamer wraps approximately 147 bp of DNA. In terms of processing, monoubiquitinated to form H2BK123ub1. H2BK123ub1 gives a specific tag for epigenetic transcriptional activation and is also prerequisite for H3K4me and H3K79me formation. H2BK123ub1 also modulates the formation of double-strand breaks during meiosis and is a prerequisite for DNA-damage checkpoint activation. Phosphorylated to form H2BS10ph during progression through meiotic prophase. May be correlated with chromosome condensation. Post-translationally, acetylation of N-terminal lysines and particularly formation of H2BK11ac has a positive effect on transcription. In terms of processing, sumoylation to form H2BK6su occurs preferentially near the telomeres and represses gene transcription.

The protein localises to the nucleus. The protein resides in the chromosome. Core component of nucleosome. Nucleosomes wrap and compact DNA into chromatin, limiting DNA accessibility to the cellular machineries which require DNA as a template. Histones thereby play a central role in transcription regulation, DNA repair, DNA replication and chromosomal stability. DNA accessibility is regulated via a complex set of post-translational modifications of histones, also called histone code, and nucleosome remodeling. This chain is Histone H2B (htbA), found in Agaricus bisporus (White button mushroom).